A 611-amino-acid polypeptide reads, in one-letter code: Rop guanine nucleotide exchange factor 5 (611 aa).

The disordered stretch occupies residues Met1–Gly62. A compositionally biased stretch (low complexity) spans Ser34–Ser51. Residues Phe93 to Asn477 enclose the PRONE domain. Disordered stretches follow at residues Thr513–Ile541 and Asp588–Ser611. Residues Lys525–Ile541 are compositionally biased toward basic and acidic residues.

In terms of biological role, guanine-nucleotide exchange factor (GEF) that acts as an activator of Rop (Rho of plants) GTPases by promoting the exchange of GDP for GTP. The sequence is that of Rop guanine nucleotide exchange factor 5 (ROPGEF5) from Arabidopsis thaliana (Mouse-ear cress).